A 141-amino-acid polypeptide reads, in one-letter code: Putative pre-16S rRNA nuclease (141 aa).

This sequence belongs to the YqgF nuclease family.

It is found in the cytoplasm. Its function is as follows. Could be a nuclease involved in processing of the 5'-end of pre-16S rRNA. This is Putative pre-16S rRNA nuclease from Histophilus somni (strain 129Pt) (Haemophilus somnus).